A 593-amino-acid chain; its full sequence is Probable metalloprotease ARX1 (593 aa).

This sequence belongs to the peptidase M24 family. As to quaternary structure, component of the nucleoplasmic and cytoplasmic pre-60S ribosomal particles. Interacts directly with REI1.

The protein localises to the cytoplasm. Its subcellular location is the nucleus. Its function is as follows. Probable metalloprotease involved in proper assembly of pre-ribosomal particles during the biogenesis of the 60S ribosomal subunit. Accompanies the pre-60S particles to the cytoplasm. The polypeptide is Probable metalloprotease ARX1 (ARX1) (Saccharomyces cerevisiae (strain ATCC 204508 / S288c) (Baker's yeast)).